A 206-amino-acid polypeptide reads, in one-letter code: 2-phospho-L-lactate guanylyltransferase (206 aa).

The protein belongs to the CofC family. As to quaternary structure, homodimer.

It carries out the reaction (2S)-2-phospholactate + GTP + H(+) = (2S)-lactyl-2-diphospho-5'-guanosine + diphosphate. Its pathway is cofactor biosynthesis; coenzyme F420 biosynthesis. Its function is as follows. Guanylyltransferase that catalyzes the activation of (2S)-2-phospholactate (2-PL) as (2S)-lactyl-2-diphospho-5'-guanosine, via the condensation of 2-PL with GTP. It is involved in the biosynthesis of coenzyme F420, a hydride carrier cofactor. The sequence is that of 2-phospho-L-lactate guanylyltransferase from Archaeoglobus profundus (strain DSM 5631 / JCM 9629 / NBRC 100127 / Av18).